Here is a 161-residue protein sequence, read N- to C-terminus: Allophycocyanin beta chain (161 aa).

At Asn71 the chain carries N4-methylasparagine. Residue Cys81 coordinates (2R,3E)-phycocyanobilin.

It belongs to the phycobiliprotein family. Heterodimer of an alpha and a beta chain. Contains one covalently linked phycocyanobilin chromophore.

It is found in the cellular thylakoid membrane. Light-harvesting photosynthetic bile pigment-protein from the phycobiliprotein complex. Allophycocyanin has a maximum absorption at approximately 650 nanometers. This Mastigocladus laminosus (Fischerella sp.) protein is Allophycocyanin beta chain (apcB).